A 226-amino-acid polypeptide reads, in one-letter code: Phosphoglycolate phosphatase (226 aa).

Residue Asp12 is the Nucleophile of the active site. Asp12, Asp14, and Asp177 together coordinate Mg(2+).

The protein belongs to the HAD-like hydrolase superfamily. CbbY/CbbZ/Gph/YieH family. Mg(2+) serves as cofactor.

It carries out the reaction 2-phosphoglycolate + H2O = glycolate + phosphate. It functions in the pathway organic acid metabolism; glycolate biosynthesis; glycolate from 2-phosphoglycolate: step 1/1. Specifically catalyzes the dephosphorylation of 2-phosphoglycolate. Is involved in the dissimilation of the intracellular 2-phosphoglycolate formed during the DNA repair of 3'-phosphoglycolate ends, a major class of DNA lesions induced by oxidative stress. This chain is Phosphoglycolate phosphatase, found in Colwellia psychrerythraea (strain 34H / ATCC BAA-681) (Vibrio psychroerythus).